A 926-amino-acid polypeptide reads, in one-letter code: Alpha-aminoadipic semialdehyde synthase, mitochondrial (926 aa).

A mitochondrion-targeting transit peptide spans 1 to 27 (MLQVHRTGLGRLGVSLSKGLHHKAVLA). Residues 28-476 (VRREDVNAWE…ESRERAQSLS (449 aa)) form a lysine-ketoglutarate reductase region. N6-acetyllysine is present on residues Lys48 and Lys56. Lys93 carries the N6-acetyllysine; alternate modification. At Lys93 the chain carries N6-succinyllysine; alternate. At Lys128 the chain carries N6-acetyllysine. At Lys138 the chain carries N6-acetyllysine; alternate. Lys138 bears the N6-succinyllysine; alternate mark. The residue at position 274 (Lys274) is an N6-succinyllysine. N6-acetyllysine; alternate is present on Lys286. Lys286 bears the N6-succinyllysine; alternate mark. The residue at position 333 (Lys333) is an N6-succinyllysine. At Lys458 the chain carries N6-acetyllysine; alternate. The residue at position 458 (Lys458) is an N6-succinyllysine; alternate. The interval 477–926 (MGTRRKVLVL…IYTTQSTIKP (450 aa)) is saccharopine dehydrogenase. The NAD(+) site is built by Ser488, Asp512, and Gln516. Lys523 carries the post-translational modification N6-acetyllysine; alternate. Residue Lys523 is modified to N6-succinyllysine; alternate. Ile533 provides a ligand contact to NAD(+). Lys535 is modified (N6-acetyllysine; alternate). Lys535 carries the post-translational modification N6-succinyllysine; alternate. 3 residues coordinate NAD(+): Leu554, Ala576, and Ser577. Residue 577–578 (SY) participates in L-saccharopine binding. The residue at position 584 (Lys584) is an N6-acetyllysine; alternate. An N6-succinyllysine; alternate modification is found at Lys584. Residues Leu603, Asp604, and Pro605 each coordinate NAD(+). An L-saccharopine-binding site is contributed by Asp604. Arg703 lines the L-saccharopine pocket. Lys707 is modified (N6-acetyllysine). 724 to 726 (TLR) is an L-saccharopine binding site. An N6-succinyllysine modification is found at Lys732. Lys739 is subject to N6-acetyllysine. Lys761 carries the N6-acetyllysine; alternate modification. An N6-succinyllysine; alternate modification is found at Lys761. Lys780 carries the N6-acetyllysine modification.

This sequence in the N-terminal section; belongs to the AlaDH/PNT family. The protein in the C-terminal section; belongs to the saccharopine dehydrogenase family. As to quaternary structure, homotetramer. In terms of tissue distribution, expressed in all 16 tissues examined with highest expression in the liver.

It is found in the mitochondrion. It catalyses the reaction L-saccharopine + NADP(+) + H2O = L-lysine + 2-oxoglutarate + NADPH + H(+). The catalysed reaction is L-saccharopine + NAD(+) + H2O = (S)-2-amino-6-oxohexanoate + L-glutamate + NADH + H(+). It participates in amino-acid degradation; L-lysine degradation via saccharopine pathway; glutaryl-CoA from L-lysine: step 1/6. It functions in the pathway amino-acid degradation; L-lysine degradation via saccharopine pathway; glutaryl-CoA from L-lysine: step 2/6. Bifunctional enzyme that catalyzes the first two steps in lysine degradation. The chain is Alpha-aminoadipic semialdehyde synthase, mitochondrial from Homo sapiens (Human).